The following is a 591-amino-acid chain: Aspartate--tRNA(Asp/Asn) ligase (591 aa).

E170 is an L-aspartate binding site. The aspartate stretch occupies residues 194-197; it reads QLFK. R216 contacts L-aspartate. ATP contacts are provided by residues 216–218 and Q225; that span reads RDE. H448 provides a ligand contact to L-aspartate. E482 serves as a coordination point for ATP. R489 serves as a coordination point for L-aspartate. 534–537 contributes to the ATP binding site; the sequence is GWDR. The tract at residues 559 to 591 is disordered; the sequence is GGVDPLTDAPAPITEQQRKESGIDVKPEPSKPH. A compositionally biased stretch (basic and acidic residues) spans 574 to 591; sequence QQRKESGIDVKPEPSKPH.

This sequence belongs to the class-II aminoacyl-tRNA synthetase family. Type 1 subfamily. Homodimer.

The protein localises to the cytoplasm. It catalyses the reaction tRNA(Asx) + L-aspartate + ATP = L-aspartyl-tRNA(Asx) + AMP + diphosphate. Its function is as follows. Aspartyl-tRNA synthetase with relaxed tRNA specificity since it is able to aspartylate not only its cognate tRNA(Asp) but also tRNA(Asn). Reaction proceeds in two steps: L-aspartate is first activated by ATP to form Asp-AMP and then transferred to the acceptor end of tRNA(Asp/Asn). This is Aspartate--tRNA(Asp/Asn) ligase from Mycolicibacterium paratuberculosis (strain ATCC BAA-968 / K-10) (Mycobacterium paratuberculosis).